The following is a 188-amino-acid chain: Peptidyl-tRNA hydrolase (188 aa).

Tyrosine 15 contributes to the tRNA binding site. Catalysis depends on histidine 20, which acts as the Proton acceptor. TRNA-binding residues include tyrosine 64, asparagine 66, and asparagine 112.

The protein belongs to the PTH family. In terms of assembly, monomer.

It localises to the cytoplasm. The enzyme catalyses an N-acyl-L-alpha-aminoacyl-tRNA + H2O = an N-acyl-L-amino acid + a tRNA + H(+). Functionally, hydrolyzes ribosome-free peptidyl-tRNAs (with 1 or more amino acids incorporated), which drop off the ribosome during protein synthesis, or as a result of ribosome stalling. Catalyzes the release of premature peptidyl moieties from peptidyl-tRNA molecules trapped in stalled 50S ribosomal subunits, and thus maintains levels of free tRNAs and 50S ribosomes. The chain is Peptidyl-tRNA hydrolase from Cytophaga hutchinsonii (strain ATCC 33406 / DSM 1761 / CIP 103989 / NBRC 15051 / NCIMB 9469 / D465).